The chain runs to 107 residues: Large ribosomal subunit protein P2 (107 aa).

Low complexity predominate over residues 63-83; it reads SSVPSGGSAPAAAAPSGGAAP. Residues 63–107 form a disordered region; the sequence is SSVPSGGSAPAAAAPSGGAAPKAEEKKKEEPKEESDDDMGFGLFD. The span at 84-93 shows a compositional bias: basic and acidic residues; it reads KAEEKKKEEP.

Belongs to the eukaryotic ribosomal protein P1/P2 family. As to quaternary structure, P1 and P2 exist as dimers at the large ribosomal subunit. In terms of processing, phosphorylated.

Its function is as follows. Plays an important role in the elongation step of protein synthesis. The polypeptide is Large ribosomal subunit protein P2 (Caenorhabditis elegans).